Reading from the N-terminus, the 535-residue chain is CTP synthase (535 aa).

The interval 1–267 (MTKYIFVTGG…DQIVCDHLKL (267 aa)) is amidoligase domain. Ser13 serves as a coordination point for CTP. Position 13 (Ser13) interacts with UTP. Residue 14–19 (SLGKGI) participates in ATP binding. Position 54 (Tyr54) interacts with L-glutamine. An ATP-binding site is contributed by Asp71. Positions 71 and 141 each coordinate Mg(2+). CTP is bound by residues 148-150 (DIE), 188-193 (KTKPTQ), and Lys224. UTP is bound by residues 188–193 (KTKPTQ) and Lys224. The Glutamine amidotransferase type-1 domain occupies 292 to 534 (RIALVGKYVE…VQASITNKES (243 aa)). Position 354 (Gly354) interacts with L-glutamine. Cys381 acts as the Nucleophile; for glutamine hydrolysis in catalysis. Residues 382-385 (LGMQ), Glu405, and Arg462 each bind L-glutamine. Residues His507 and Glu509 contribute to the active site.

It belongs to the CTP synthase family. Homotetramer.

The catalysed reaction is UTP + L-glutamine + ATP + H2O = CTP + L-glutamate + ADP + phosphate + 2 H(+). The enzyme catalyses L-glutamine + H2O = L-glutamate + NH4(+). It catalyses the reaction UTP + NH4(+) + ATP = CTP + ADP + phosphate + 2 H(+). It participates in pyrimidine metabolism; CTP biosynthesis via de novo pathway; CTP from UDP: step 2/2. With respect to regulation, allosterically activated by GTP, when glutamine is the substrate; GTP has no effect on the reaction when ammonia is the substrate. The allosteric effector GTP functions by stabilizing the protein conformation that binds the tetrahedral intermediate(s) formed during glutamine hydrolysis. Inhibited by the product CTP, via allosteric rather than competitive inhibition. Catalyzes the ATP-dependent amination of UTP to CTP with either L-glutamine or ammonia as the source of nitrogen. Regulates intracellular CTP levels through interactions with the four ribonucleotide triphosphates. The sequence is that of CTP synthase from Bacillus cytotoxicus (strain DSM 22905 / CIP 110041 / 391-98 / NVH 391-98).